The chain runs to 75 residues: Small ribosomal subunit protein bS18 (75 aa).

Belongs to the bacterial ribosomal protein bS18 family. Part of the 30S ribosomal subunit. Forms a tight heterodimer with protein bS6.

In terms of biological role, binds as a heterodimer with protein bS6 to the central domain of the 16S rRNA, where it helps stabilize the platform of the 30S subunit. The polypeptide is Small ribosomal subunit protein bS18 (Alteromonas mediterranea (strain DSM 17117 / CIP 110805 / LMG 28347 / Deep ecotype)).